A 422-amino-acid chain; its full sequence is Tyrosine--tRNA ligase (422 aa).

Tyr37 serves as a coordination point for L-tyrosine. The 'HIGH' region motif lies at 42–51 (PTEESLHIGH). Residues Tyr175 and Gln179 each contribute to the L-tyrosine site. The 'KMSKS' region motif lies at 235–239 (KFGKT). Lys238 contacts ATP. An S4 RNA-binding domain is found at 357 to 414 (KDLQEALVLTSLAQSRTQAKNMIISNSISINTEKIRKNHIFHEKDKLFGKFTLLSRGK).

The protein belongs to the class-I aminoacyl-tRNA synthetase family. TyrS type 1 subfamily. In terms of assembly, homodimer.

It is found in the cytoplasm. It catalyses the reaction tRNA(Tyr) + L-tyrosine + ATP = L-tyrosyl-tRNA(Tyr) + AMP + diphosphate + H(+). Functionally, catalyzes the attachment of tyrosine to tRNA(Tyr) in a two-step reaction: tyrosine is first activated by ATP to form Tyr-AMP and then transferred to the acceptor end of tRNA(Tyr). In Buchnera aphidicola subsp. Acyrthosiphon pisum (strain 5A), this protein is Tyrosine--tRNA ligase.